The chain runs to 162 residues: Phosphopantetheine adenylyltransferase (162 aa).

Residue threonine 14 participates in substrate binding. ATP is bound by residues 14–15 and histidine 22; that span reads TF. Lysine 46, leucine 78, and arginine 92 together coordinate substrate. ATP contacts are provided by residues 93-95, glutamate 103, and 128-134; these read GLR and HSFISSS.

It belongs to the bacterial CoaD family. In terms of assembly, homohexamer. Mg(2+) is required as a cofactor.

The protein localises to the cytoplasm. The enzyme catalyses (R)-4'-phosphopantetheine + ATP + H(+) = 3'-dephospho-CoA + diphosphate. It participates in cofactor biosynthesis; coenzyme A biosynthesis; CoA from (R)-pantothenate: step 4/5. In terms of biological role, reversibly transfers an adenylyl group from ATP to 4'-phosphopantetheine, yielding dephospho-CoA (dPCoA) and pyrophosphate. This is Phosphopantetheine adenylyltransferase from Xylella fastidiosa (strain 9a5c).